We begin with the raw amino-acid sequence, 699 residues long: Elongation factor G (699 aa).

Residues 8–288 (EDYRNFGIMA…AVVDYLPSPI (281 aa)) enclose the tr-type G domain. Residues 17 to 24 (AHIDAGKT), 86 to 90 (DTPGH), and 140 to 143 (NKMD) each bind GTP.

This sequence belongs to the TRAFAC class translation factor GTPase superfamily. Classic translation factor GTPase family. EF-G/EF-2 subfamily.

Its subcellular location is the cytoplasm. Catalyzes the GTP-dependent ribosomal translocation step during translation elongation. During this step, the ribosome changes from the pre-translocational (PRE) to the post-translocational (POST) state as the newly formed A-site-bound peptidyl-tRNA and P-site-bound deacylated tRNA move to the P and E sites, respectively. Catalyzes the coordinated movement of the two tRNA molecules, the mRNA and conformational changes in the ribosome. This is Elongation factor G from Sinorhizobium fredii (strain NBRC 101917 / NGR234).